We begin with the raw amino-acid sequence, 596 residues long: Endoribonuclease ZC3H12A (596 aa).

Disordered regions lie at residues methionine 1 to leucine 48 and glutamine 97 to aspartate 134. The segment covering valine 10–leucine 19 has biased composition (polar residues). The tract at residues glutamate 42–lysine 87 is ubiquitin association domain. The interval valine 81 to glycine 150 is necessary for interaction with TANK. The RNase stretch occupies residues glycine 112–leucine 281. Positions leucine 135–asparagine 290 constitute an RNase NYN domain. The RNA binding stretch occupies residues arginine 214–arginine 220. Position 226 (aspartate 226) interacts with Mg(2+). Disordered stretches follow at residues aspartate 278–cysteine 306 and asparagine 340–tryptophan 417. Residues histidine 301 to glutamate 324 form a C3H1-type zinc finger. Positions histidine 301 to serine 454 are necessary for interaction with ZC3H12D. Serine 344 is subject to Phosphoserine. Residues glutamine 356–serine 368 show a composition bias toward low complexity. Serine 435 and serine 439 each carry phosphoserine. The segment at tyrosine 511 to valine 543 is disordered. Low complexity predominate over residues valine 524 to proline 533.

The protein belongs to the ZC3H12 family. As to quaternary structure, oligomer. Found in a deubiquitination complex with TANK, USP10 and ZC3H12A; this complex inhibits genotoxic stress- or interleukin-1-beta-mediated NF-kappaB activation by promoting IKBKG or TRAF6 deubiquitination. Interacts with IKBKG; this interaction increases in response to DNA damage. Interacts with TANK; this interaction increases in response to DNA damage and serves as a bridge to anchor both TANK and USP10 into a deubiquitinating complex. Interacts with TRAF6; this interaction increases in response to DNA damage and is stimulated by TANK. Interacts with USP10; this interaction increases in response to DNA damage and serves as a bridge to anchor both TANK and USP10 into a deubiquitinating complex. Interacts with ZC3H12D. Interacts with TNRC6A. Interacts with IKBKB/IKKB. Interacts with IKBKB/IKKB. Interacts with IKBKB/IKKB. Interacts with BTRC; the interaction occurs when ZC3H12A is phosphorylated in a IKBKB/IKKB-dependent manner. Interacts with IRAK1; this interaction increases the interaction between ZC3H12A and IKBKB/IKKB. Interacts with UPF1; this interaction occurs in a mRNA translationally active- and termination-dependent manner and is essential for ZC3H12A-mediated degradation of target mRNAs. Associates with ribosomes. Interacts with ubiquitin. Requires Mg(2+) as cofactor. Post-translationally, proteolytically cleaved between Arg-111 and Arg-214 by MALT1 in activated T-cells; cleavage at Arg-111 is critical for promoting ZC3H12A degradation in response to T-cell receptor (TCR) stimulation, and hence is necessary for prolonging the stability of a set of mRNAs controlling T-cell activation and Th17 cell differentiation. Phosphorylated by IRAK1; phosphorylation is necessary for subsequent phosphorylation by the I-kappa-B-kinase (IKK) complex. Phosphorylated by I-kappa-B-kinases (IKKs) at Ser-435 and Ser-439 upon lipopolysaccharide (LPS) or IL1B stimulation in macrophages through the MyD88-dependent signaling pathway; these phosphorylations promote rapid ubiquitin proteasome-mediated degradation of ZC3H12A in macrophages and hence allows its target mRNAs, such as IL6, to escape from degradation and accumulate during the inflammatory response. In terms of processing, ubiquitinated; ubiquitination is induced in response to interleukin IL1 receptor stimuli in a IKBKB/IKKB and IRAK1-dependent manner, leading to proteasome-mediated degradation. Expressed in CD4(+) helper T-cells (at protein level). Highly expressed in macrophages. Expressed in lung, lymph nodes, spleen and thymus. Expressed weakly in heart. Expressed weakly in cardiomyocytes (at protein level). Expressed in spleen, lung, intestine, brown adipose tissue and thymus. Weakly expressed in the heart. Weakly expressed in cardiomyocytes.

It localises to the nucleus. The protein resides in the cytoplasm. Its subcellular location is the rough endoplasmic reticulum membrane. It is found in the cytoplasmic granule. The protein localises to the P-body. Functionally, endoribonuclease involved in various biological functions such as cellular inflammatory response and immune homeostasis, glial differentiation of neuroprogenitor cells, cell death of cardiomyocytes, adipogenesis and angiogenesis. Functions as an endoribonuclease involved in mRNA decay. Modulates the inflammatory response by promoting the degradation of a set of translationally active cytokine-induced inflammation-related mRNAs, such as IL6 and IL12B, during the early phase of inflammation. Prevents aberrant T-cell-mediated immune reaction by degradation of multiple mRNAs controlling T-cell activation, such as those encoding cytokines (IL6 and IL2), cell surface receptors (ICOS, TNFRSF4 and TNFR2) and transcription factor (REL). Inhibits cooperatively with ZC3H12A the differentiation of helper T cells Th17 in lungs. They repress target mRNA encoding the Th17 cell-promoting factors IL6, ICOS, REL, IRF4, NFKBID and NFKBIZ. The cooperation requires RNA-binding by RC3H1 and the nuclease activity of ZC3H12A. Together with RC3H1, destabilizes TNFRSF4/OX40 mRNA by binding to the conserved stem loop structure in its 3'UTR. Self regulates by destabilizing its own mRNA. Cleaves mRNA harboring a stem-loop (SL), often located in their 3'-UTRs, during the early phase of inflammation in a helicase UPF1-dependent manner. Plays a role in the inhibition of microRNAs (miRNAs) biogenesis. Cleaves the terminal loop of a set of precursor miRNAs (pre-miRNAs) important for the regulation of the inflammatory response leading to their degradation, and thus preventing the biosynthesis of mature miRNAs. Also plays a role in promoting angiogenesis in response to inflammatory cytokines by inhibiting the production of antiangiogenic microRNAs via its anti-dicer RNase activity. Affects the overall ubiquitination of cellular proteins. Positively regulates deubiquitinase activity promoting the cleavage at 'Lys-48'- and 'Lys-63'-linked polyubiquitin chains on TNF receptor-associated factors (TRAFs), preventing JNK and NF-kappa-B signaling pathway activation, and hence negatively regulating macrophage-mediated inflammatory response and immune homeostasis. Induces also deubiquitination of the transcription factor HIF1A, probably leading to its stabilization and nuclear import, thereby positively regulating the expression of proangiogenic HIF1A-targeted genes. Involved in a TANK-dependent negative feedback response to attenuate NF-kappaB activation through the deubiquitination of IKBKG or TRAF6 in response to interleukin-1-beta (IL1B) stimulation or upon DNA damage. Prevents stress granules (SGs) formation and promotes macrophage apoptosis under stress conditions, including arsenite-induced oxidative stress, heat shock, and energy deprivation. Plays a role in the regulation of macrophage polarization; promotes IL4-induced polarization of macrophages M1 into anti-inflammatory M2 state. May also act as a transcription factor that regulates the expression of multiple genes involved in inflammatory response, angiogenesis, adipogenesis and apoptosis. Functions as a positive regulator of glial differentiation of neuroprogenitor cells through an amyloid precursor protein (APP)-dependent signaling pathway. Attenuates septic myocardial contractile dysfunction in response to lipopolysaccharide (LPS) by reducing I-kappa-B-kinase (IKK)-mediated NF-kappa-B activation, and hence myocardial pro-inflammatory cytokine production. In Mus musculus (Mouse), this protein is Endoribonuclease ZC3H12A.